We begin with the raw amino-acid sequence, 804 residues long: Lon protease (804 aa).

Residues 1-23 are disordered; sequence MSADSENETSESSPAGEATASTS. The 195-residue stretch at 30 to 224 folds into the Lon N-terminal domain; the sequence is LILLPVRNAV…KVLDAVAGRI (195 aa). 376 to 383 contributes to the ATP binding site; sequence GPPGVGKT. The region spanning 612–793 is the Lon proteolytic domain; that stretch reads TSLPGVVTGL…DDAVREIIED (182 aa). Residues Ser-699 and Lys-742 contribute to the active site.

The protein belongs to the peptidase S16 family. As to quaternary structure, homohexamer. Organized in a ring with a central cavity.

It localises to the cytoplasm. It carries out the reaction Hydrolysis of proteins in presence of ATP.. Its function is as follows. ATP-dependent serine protease that mediates the selective degradation of mutant and abnormal proteins as well as certain short-lived regulatory proteins. Required for cellular homeostasis and for survival from DNA damage and developmental changes induced by stress. Degrades polypeptides processively to yield small peptide fragments that are 5 to 10 amino acids long. Binds to DNA in a double-stranded, site-specific manner. The sequence is that of Lon protease from Paraburkholderia phytofirmans (strain DSM 17436 / LMG 22146 / PsJN) (Burkholderia phytofirmans).